We begin with the raw amino-acid sequence, 190 residues long: Potassium-transporting ATPase KdpC subunit (190 aa).

A helical membrane pass occupies residues 10-30 (TFIFLLLITGGVYPLLTTVLG).

Belongs to the KdpC family. As to quaternary structure, the system is composed of three essential subunits: KdpA, KdpB and KdpC.

The protein localises to the cell inner membrane. Part of the high-affinity ATP-driven potassium transport (or Kdp) system, which catalyzes the hydrolysis of ATP coupled with the electrogenic transport of potassium into the cytoplasm. This subunit acts as a catalytic chaperone that increases the ATP-binding affinity of the ATP-hydrolyzing subunit KdpB by the formation of a transient KdpB/KdpC/ATP ternary complex. The protein is Potassium-transporting ATPase KdpC subunit of Escherichia coli O139:H28 (strain E24377A / ETEC).